A 621-amino-acid chain; its full sequence is Kininogen-1 (621 aa).

Residues 1 to 18 (MKLITILFLCSRLLPSLT) form the signal peptide. Positions 27–131 (CNDQDVFKAV…IQTCLITPAE (105 aa)) constitute a Cystatin kininogen-type 1 domain. 9 cysteine pairs are disulfide-bonded: Cys-27-Cys-591, Cys-82-Cys-93, Cys-106-Cys-125, Cys-141-Cys-144, Cys-205-Cys-217, Cys-228-Cys-247, Cys-263-Cys-266, Cys-327-Cys-339, and Cys-350-Cys-369. Residues Asn-47 and Asn-87 are each glycosylated (N-linked (GlcNAc...) asparagine). Thr-136 carries O-linked (GalNAc...) threonine; partial glycosylation. The Cystatin kininogen-type 2 domain maps to 150 to 253 (TKSPDLEPVL…SQKCDLYPVK (104 aa)). Residues Asn-168 and Asn-169 are each glycosylated (N-linked (GlcNAc...) asparagine). N-linked (GlcNAc...) asparagine; partial glycosylation occurs at Asn-197. Asn-204 carries an N-linked (GlcNAc...) asparagine glycan. The Cystatin kininogen-type 3 domain occupies 272-375 (VDSPDLEEPL…TVNCQPLGQT (104 aa)). Ser-331 is modified (phosphoserine). Positions 396 to 497 (EGSTTVSLPH…GKNNGKHYDW (102 aa)) are disordered. An O-linked (GalNAc...) serine glycan is attached at Ser-398. Thr-399 and Thr-400 each carry an O-linked (GalNAc...) threonine glycan. An O-linked (GalNAc...) serine glycan is attached at Ser-406. Residues 444–492 (GHKHKHDQGHGHHGSHGLGHGHQKQHGLGHGHKHGHGHGKHKNKGKNNG) show a composition bias toward basic residues. O-linked (GalNAc...) serine glycosylation occurs at Ser-512. O-linked (GalNAc...) threonine glycosylation is found at Thr-520, Thr-524, Thr-536, Thr-548, Thr-553, and Thr-570. Ser-581 is a glycosylation site (O-linked (GalNAc...) serine).

In terms of processing, bradykinin is released from kininogen by plasma kallikrein. Phosphorylated by FAM20C in the extracellular medium. Post-translationally, bradykinin is inactivated by ACE, which removes the dipeptide Arg-Phe from its C-terminus. Plasma.

Its subcellular location is the secreted. The protein resides in the extracellular space. Functionally, kininogens are inhibitors of thiol proteases. HMW-kininogen plays an important role in blood coagulation by helping to position optimally prekallikrein and factor XI next to factor XII; HMW-kininogen inhibits the thrombin- and plasmin-induced aggregation of thrombocytes. LMW-kininogen inhibits the aggregation of thrombocytes. LMW-kininogen is in contrast to HMW-kininogen not involved in blood clotting. The active peptide bradykinin is a potent vasodilatator that is released from HMW-kininogen shows a variety of physiological effects: (A) influence in smooth muscle contraction, (B) induction of hypotension, (C) natriuresis and diuresis, (D) decrease in blood glucose level, (E) it is a mediator of inflammation and causes (E1) increase in vascular permeability, (E2) stimulation of nociceptors (4E3) release of other mediators of inflammation (e.g. prostaglandins), (F) it has a cardioprotective effect (directly via bradykinin action, indirectly via endothelium-derived relaxing factor action). This Bos taurus (Bovine) protein is Kininogen-1 (KNG1).